The following is a 718-amino-acid chain: Ophiobolin F synthase oblA (718 aa).

Positions 1–320 are (7Z)-ophiobola-7,19-dien-3-ol synthase; sequence MACKYSTLID…RYNGPTKFNE (320 aa). Aspartate 93 and aspartate 97 together coordinate Mg(2+). Residue aspartate 93 participates in substrate binding. The DDXXD 1 motif lies at 93 to 97; sequence DDVID. Residues 180–183, asparagine 224, 228–232, and 311–312 contribute to the substrate site; these read RALD, SFEKE, and RY. Residues 224–232 carry the NSE/DTE motif; sequence NDLFSFEKE. The interval 321-718 is geranylfarnesyl diphosphate synthase; it reads LQLLRSEHGL…LRVMLELLKV (398 aa). The tract at residues 346 to 391 is disordered; it reads LVEGDCHESKPNELKRKRNGVSVDDEMRTNGTNGAKKPAHVSQPST. Residues 349–359 are compositionally biased toward basic and acidic residues; that stretch reads GDCHESKPNEL. Isopentenyl diphosphate-binding residues include lysine 429, arginine 432, and histidine 461. Aspartate 468 and aspartate 472 together coordinate Mg(2+). The DDXXD 2 signature appears at 468–472; that stretch reads DDLED. Position 477 (arginine 477) interacts with dimethylallyl diphosphate. Residue arginine 478 coordinates isopentenyl diphosphate. Residues lysine 555, threonine 556, glutamine 594, asparagine 601, lysine 611, and lysine 621 each coordinate dimethylallyl diphosphate.

The protein in the N-terminal section; belongs to the terpene synthase family. This sequence in the C-terminal section; belongs to the FPP/GGPP synthase family. The cofactor is Mg(2+).

The catalysed reaction is isopentenyl diphosphate + (2E,6E)-farnesyl diphosphate = (2E,6E,10E)-geranylgeranyl diphosphate + diphosphate. The enzyme catalyses isopentenyl diphosphate + (2E,6E,10E)-geranylgeranyl diphosphate = (2E,6E,10E,14E)-geranylfarnesyl diphosphate + diphosphate. It catalyses the reaction (2E,6E,10E,14E)-geranylfarnesyl diphosphate + H2O = ophiobolin F + diphosphate. The protein operates within secondary metabolite biosynthesis; terpenoid biosynthesis. Bifunctional sesterterpene synthase; part of the gene cluster that mediates the biosynthesis of the sesterterpenes ophiobolins, fungal phytotoxins with potential anti-cancer activities. The first step of the pathway is performed by the sesterterpene synthase oblA that possesses both prenyl transferase and terpene cyclase activity, converting isopentenyl diphosphate and dimethylallyl diphosphate into geranylfarnesyl diphosphate (GFPP) and further converting GFPP into ophiobolin F, respectively. Other sesterterpenoids (C(25) terpenoids) are found as minor products of oblA. It is expected that ophiobolin F is then oxidized to ophiobolin A via ophiobolin C and ophiobolin B intermediates by the combined action of the cytochrome P450 monooxygenase oblB and the FAD-dependent oxidoreductase oblC. Although oblB catalyzes multistep oxygenations at C5 and C21/C7 in a relatively efficient manner, it is unable to convert ophiobolin F to ophiobolin C and produces instead several unexpected derivatives. In Aspergillus clavatus (strain ATCC 1007 / CBS 513.65 / DSM 816 / NCTC 3887 / NRRL 1 / QM 1276 / 107), this protein is Ophiobolin F synthase oblA.